Reading from the N-terminus, the 360-residue chain is Tubulin-like protein CetZ2 (360 aa).

GTP contacts are provided by residues Q10–K14, G65–G66, G106–G108, E138, N165, and N183. Over residues E334–D354 the composition is skewed to basic and acidic residues. Residues E334 to L360 form a disordered region.

This sequence belongs to the CetZ family.

It is found in the cytoplasm. In terms of biological role, involved in cell shape control. The polypeptide is Tubulin-like protein CetZ2 (Haloferax volcanii (strain ATCC 29605 / DSM 3757 / JCM 8879 / NBRC 14742 / NCIMB 2012 / VKM B-1768 / DS2) (Halobacterium volcanii)).